Here is a 512-residue protein sequence, read N- to C-terminus: Sucrose-6-phosphate hydrolase (512 aa).

Residues Trp-40–Asp-43, Gln-59, Trp-67, Phe-102–Ser-103, Arg-165–Asp-166, Glu-229, and Trp-311 contribute to the substrate site. The active site involves Asp-43.

Belongs to the glycosyl hydrolase 32 family.

The protein localises to the cytoplasm. It catalyses the reaction Hydrolysis of terminal non-reducing beta-D-fructofuranoside residues in beta-D-fructofuranosides.. Its pathway is glycan biosynthesis; sucrose metabolism. This chain is Sucrose-6-phosphate hydrolase (sacA), found in Zymomonas mobilis subsp. mobilis (strain ATCC 10988 / DSM 424 / LMG 404 / NCIMB 8938 / NRRL B-806 / ZM1).